A 424-amino-acid chain; its full sequence is MTQMEMARKGVVSDEMKKVAEYEGVDVEIVRQKLAEGRAVLPKNKLHRIERPMIVGEGFSVKVNANIGTSQGFSSLEEEKEKARVAIEYGADSLMVLSTWGDLREIRRAIVEMSPVPVGSVPIYDSAVRSYQMKKNVVDFSEKDFFDMVIAHAEDGIDFMTIHVGVTRRVLDRIKSSRRVLKIVSRGGAIIAGWMIKNNKENPFYEHFDELLDIAKDYDITLSLGDGMRPGAVVDASDAQQFEELFVMGELVERAREKGVQVMLEGPGHVPLNEVEMNVRLMKKIGKGAPIFLLGPLPTDRAMGYDHIACAIGGALAGYYGADFLCYVTPSEHISLPDVEDVREGVIASKIAAIVADVARGNKKAWELEKKMALARKNFDWETMFSLSLGKDVAKKKYEERPYPDKGCSMCGPFCAIKIAEEFS.

Substrate-binding positions include Asn66, Met95, Tyr124, His163, 185-187, 226-229, and Glu265; these read SRG and DGMR. A Zn(2+)-binding site is contributed by His269. Phe292 lines the substrate pocket. Residue His333 participates in Zn(2+) binding. [4Fe-4S] cluster is bound by residues Cys408, Cys411, and Cys415.

It belongs to the ThiC family. The cofactor is [4Fe-4S] cluster.

It carries out the reaction 5-amino-1-(5-phospho-beta-D-ribosyl)imidazole + S-adenosyl-L-methionine = 4-amino-2-methyl-5-(phosphooxymethyl)pyrimidine + CO + 5'-deoxyadenosine + formate + L-methionine + 3 H(+). Its pathway is cofactor biosynthesis; thiamine diphosphate biosynthesis. In terms of biological role, catalyzes the synthesis of the hydroxymethylpyrimidine phosphate (HMP-P) moiety of thiamine from aminoimidazole ribotide (AIR) in a radical S-adenosyl-L-methionine (SAM)-dependent reaction. In Thermotoga petrophila (strain ATCC BAA-488 / DSM 13995 / JCM 10881 / RKU-1), this protein is Phosphomethylpyrimidine synthase.